A 332-amino-acid polypeptide reads, in one-letter code: D-galactose/methyl-galactoside binding periplasmic protein MglB (332 aa).

The signal sequence occupies residues 1-23; that stretch reads MNKKVLTLSAVMASLLFGAHAHA. Residues aspartate 37 and asparagine 114 each coordinate beta-D-galactose. Positions 37 and 114 each coordinate beta-D-glucose. Residues aspartate 157, asparagine 159, aspartate 161, lysine 163, and glutamine 165 each coordinate Ca(2+). Residues histidine 175, aspartate 177, and arginine 181 each contribute to the beta-D-galactose site. Residues histidine 175, aspartate 177, and arginine 181 each coordinate beta-D-glucose. Residue glutamate 228 participates in Ca(2+) binding. Residues asparagine 234, aspartate 259, and asparagine 279 each contribute to the beta-D-galactose site. 3 residues coordinate beta-D-glucose: asparagine 234, aspartate 259, and asparagine 279.

Belongs to the bacterial solute-binding protein 2 family. In terms of assembly, the ABC transporter complex is composed of one ATP-binding protein (MglA), two transmembrane proteins (MglC) and a solute-binding protein (MglB).

It is found in the periplasm. Functionally, part of the ABC transporter complex MglABC involved in galactose/methyl galactoside import. In addition, binds D-galactose and D-glucose and plays a role in the chemotaxis towards these two sugars by interacting with the Trg chemoreceptor. The chain is D-galactose/methyl-galactoside binding periplasmic protein MglB (mglB) from Salmonella typhimurium (strain LT2 / SGSC1412 / ATCC 700720).